Reading from the N-terminus, the 111-residue chain is MISDKIKLTAKDILEKEFKTGMRGYQQEEVDKFLDMIIKDYEAFHKEFDQLKQQNARLKRELEEQKVAATQVPQQPVQTPVAQPVYNNTNTDILKRLSNLEKAVFGSKLYE.

The stretch at 38 to 72 (IKDYEAFHKEFDQLKQQNARLKRELEEQKVAATQV) forms a coiled coil.

This sequence belongs to the GpsB family. As to quaternary structure, forms polymers through the coiled coil domains. Interacts with PBP1, MreC and EzrA.

It localises to the cytoplasm. Functionally, divisome component that associates with the complex late in its assembly, after the Z-ring is formed, and is dependent on DivIC and PBP2B for its recruitment to the divisome. Together with EzrA, is a key component of the system that regulates PBP1 localization during cell cycle progression. Its main role could be the removal of PBP1 from the cell pole after pole maturation is completed. Also contributes to the recruitment of PBP1 to the division complex. Not essential for septum formation. The chain is Cell cycle protein GpsB from Bacillus mycoides (strain KBAB4) (Bacillus weihenstephanensis).